The following is a 195-amino-acid chain: uncharacterized protein (195 aa).

Transmembrane regions (helical) follow at residues 89 to 106 (SWIS…PLLP), 111 to 128 (HLPL…VWKR), 149 to 168 (VKIS…VLLL), and 172 to 194 (LNAL…FLNI).

The protein resides in the cell membrane. This is an uncharacterized protein from Bacillus subtilis (strain 168).